Reading from the N-terminus, the 953-residue chain is Translation initiation factor IF-2 (953 aa).

Disordered regions lie at residues 48-212 (SSFS…KIDF) and 279-367 (TKLK…FHEL). 3 stretches are compositionally biased toward basic and acidic residues: residues 80–89 (TGSEHVEKTQ), 98–111 (FKAE…EQAA), and 140–188 (QGDK…ENHK). 2 stretches are compositionally biased toward polar residues: residues 191–207 (RFTN…QSKS) and 282–291 (KSSNISAKST). Basic and acidic residues predominate over residues 300 to 317 (ARPEKNRELTHHSQEGQK). The segment covering 322-338 (SWNSQNQVRNQKNSNWN) has biased composition (low complexity). A compositionally biased stretch (basic residues) spans 339 to 348 (KNKKTKKGKN). One can recognise a tr-type G domain in the interval 454 to 623 (ERAPVVTIMG…LLVAEVEELK (170 aa)). Positions 463-470 (GHVDHGKT) are G1. 463–470 (GHVDHGKT) provides a ligand contact to GTP. The segment at 488–492 (GITQH) is G2. The G3 stretch occupies residues 509-512 (DTPG). GTP-binding positions include 509 to 513 (DTPGH) and 563 to 566 (NKID). The G4 stretch occupies residues 563–566 (NKID). The tract at residues 599–601 (SAK) is G5.

The protein belongs to the TRAFAC class translation factor GTPase superfamily. Classic translation factor GTPase family. IF-2 subfamily.

The protein localises to the cytoplasm. In terms of biological role, one of the essential components for the initiation of protein synthesis. Protects formylmethionyl-tRNA from spontaneous hydrolysis and promotes its binding to the 30S ribosomal subunits. Also involved in the hydrolysis of GTP during the formation of the 70S ribosomal complex. The sequence is that of Translation initiation factor IF-2 from Streptococcus pyogenes serotype M3 (strain ATCC BAA-595 / MGAS315).